Consider the following 242-residue polypeptide: DNA repair protein RecO (242 aa).

The protein belongs to the RecO family.

In terms of biological role, involved in DNA repair and RecF pathway recombination. This Bacteroides fragilis (strain ATCC 25285 / DSM 2151 / CCUG 4856 / JCM 11019 / LMG 10263 / NCTC 9343 / Onslow / VPI 2553 / EN-2) protein is DNA repair protein RecO.